The primary structure comprises 206 residues: Large ribosomal subunit protein mL40 (206 aa).

Residues 1 to 46 (MATAAMLCAARALRPRSWIPGTCQAQVRHTHQRASLLSFWELIPMR) constitute a mitochondrion transit peptide. Residues 170-190 (PFEKEGPHYTPPVPNYQAPEG) form a disordered region.

The protein belongs to the mitochondrion-specific ribosomal protein mL40 family. Component of the mitochondrial ribosome large subunit (39S) which comprises a 16S rRNA and about 50 distinct proteins.

The protein resides in the mitochondrion. This Rattus norvegicus (Rat) protein is Large ribosomal subunit protein mL40 (Mrpl40).